The following is a 231-amino-acid chain: Putative S-adenosylmethionine-dependent methyltransferase RcsF (231 aa).

Positions 5 to 142 constitute a TsaA-like domain; it reads VSPIGYIRSC…YVPYADAVAD (138 aa). Residues 22–24, 63–64, Arg-91, and 122–125 contribute to the S-adenosyl-L-methionine site; these read PRQ, HQ, and LDGT.

It belongs to the tRNA methyltransferase O family.

The protein is Putative S-adenosylmethionine-dependent methyltransferase RcsF (rcsF) of Pseudomonas aeruginosa (strain ATCC 15692 / DSM 22644 / CIP 104116 / JCM 14847 / LMG 12228 / 1C / PRS 101 / PAO1).